Here is a 120-residue protein sequence, read N- to C-terminus: Large ribosomal subunit protein uL18 (120 aa).

The protein belongs to the universal ribosomal protein uL18 family. In terms of assembly, part of the 50S ribosomal subunit; part of the 5S rRNA/L5/L18/L25 subcomplex. Contacts the 5S and 23S rRNAs.

Functionally, this is one of the proteins that bind and probably mediate the attachment of the 5S RNA into the large ribosomal subunit, where it forms part of the central protuberance. The chain is Large ribosomal subunit protein uL18 from Acidiphilium cryptum (strain JF-5).